The chain runs to 511 residues: GMP synthase [glutamine-hydrolyzing] (511 aa).

The Glutamine amidotransferase type-1 domain occupies 5-195 (IVIVLDFGGQ…LFNICGCKGD (191 aa)). The active-site Nucleophile is the cysteine 82. Catalysis depends on residues histidine 169 and glutamate 171. The region spanning 196–386 (WKTSSFIEER…LGIPEKIVKR (191 aa)) is the GMPS ATP-PPase domain. 223–229 (SGGVDSS) contacts ATP.

In terms of assembly, homodimer.

It carries out the reaction XMP + L-glutamine + ATP + H2O = GMP + L-glutamate + AMP + diphosphate + 2 H(+). Its pathway is purine metabolism; GMP biosynthesis; GMP from XMP (L-Gln route): step 1/1. In terms of biological role, catalyzes the synthesis of GMP from XMP. The polypeptide is GMP synthase [glutamine-hydrolyzing] (Caldicellulosiruptor saccharolyticus (strain ATCC 43494 / DSM 8903 / Tp8T 6331)).